The primary structure comprises 238 residues: Flagellar L-ring protein (238 aa).

An N-terminal signal peptide occupies residues 1 to 16 (MNKAILAVAMVLLLAG). A lipid anchor (N-palmitoyl cysteine) is attached at Cys-17. The S-diacylglycerol cysteine moiety is linked to residue Cys-17.

It belongs to the FlgH family. As to quaternary structure, the basal body constitutes a major portion of the flagellar organelle and consists of four rings (L,P,S, and M) mounted on a central rod.

It localises to the cell outer membrane. The protein localises to the bacterial flagellum basal body. Assembles around the rod to form the L-ring and probably protects the motor/basal body from shearing forces during rotation. The polypeptide is Flagellar L-ring protein (Brucella melitensis biotype 2 (strain ATCC 23457)).